Here is a 148-residue protein sequence, read N- to C-terminus: Prefoldin subunit 2 (148 aa).

Residues 87–114 (KDGLEEVVRKLYETLEKKKKDLTEFEAK) are a coiled coil. Residues 122–134 (QEDNKEGGNKKEG) show a composition bias toward basic and acidic residues. The segment at 122–148 (QEDNKEGGNKKEGNAQGVLVGAASSSQ) is disordered.

The protein belongs to the prefoldin subunit beta family. Heterohexamer of two PFD-alpha type and four PFD-beta type subunits forming prefoldin co-chaperone complex. Interacts with LSM8, a specific subunit of the LSM2-8 complex, which is a core component of the spliceosome.

It is found in the cytoplasm. The protein resides in the nucleus. Functionally, binds specifically to cytosolic chaperonin (c-CPN) and transfers target proteins to it. Binds to nascent polypeptide chain and promotes folding in an environment in which there are many competing pathways for nonnative proteins. Together with other chaperonins, contribute to the regulation of gene expression by modulating the spliceosome function on pre-mRNA splicing post-transcriptionally by acting as a co-chaperone of Hsp90 to control levels of LSM8. Required for microtubules (MTs) organization and dynamicity. Involved in the process leading to microtubules dissociation in response to gibberellic acid (GA) probably due to the DELLA proteins-mediated translocation of the prefoldin co-chaperone complex from the cytoplasm to the nucleus. The polypeptide is Prefoldin subunit 2 (Arabidopsis thaliana (Mouse-ear cress)).